We begin with the raw amino-acid sequence, 318 residues long: ATP synthase gamma chain (318 aa).

Belongs to the ATPase gamma chain family. F-type ATPases have 2 components, CF(1) - the catalytic core - and CF(0) - the membrane proton channel. CF(1) has five subunits: alpha(3), beta(3), gamma(1), delta(1), epsilon(1). CF(0) has three main subunits: a, b and c.

It is found in the cell membrane. Its function is as follows. Produces ATP from ADP in the presence of a proton gradient across the membrane. The gamma chain is believed to be important in regulating ATPase activity and the flow of protons through the CF(0) complex. The protein is ATP synthase gamma chain of Lactobacillus johnsonii (strain CNCM I-12250 / La1 / NCC 533).